Reading from the N-terminus, the 841-residue chain is Beta-adaptin-like protein A (841 aa).

Disordered stretches follow at residues 1-25 (MAPPAASQRYPSPSQPSGKSEVSDL) and 650-671 (DENKGVSNNNGSAYTAPSLESS). Composition is skewed to polar residues over residues 9-25 (RYPSPSQPSGKSEVSDL) and 654-671 (GVSNNNGSAYTAPSLESS).

This sequence belongs to the adaptor complexes large subunit family. In terms of assembly, adaptor protein complexes are heterotetramers composed of two large adaptins (beta-type subunit and alpha-type or delta-type or epsilon-type or gamma-type subunit), a medium adaptin (mu-type subunit) and a small adaptin (sigma-type subunit). Interacts with AHK2.

The protein localises to the golgi apparatus. Its subcellular location is the trans-Golgi network. It localises to the cytoplasmic vesicle. The protein resides in the clathrin-coated vesicle membrane. Functionally, subunit of clathrin-associated adaptor protein complex that plays a role in protein sorting in the late-Golgi/trans-Golgi network (TGN) and/or endosomes. The AP complexes mediate both the recruitment of clathrin to membranes and the recognition of sorting signals within the cytosolic tails of transmembrane cargo molecules. In Arabidopsis thaliana (Mouse-ear cress), this protein is Beta-adaptin-like protein A (BETAA-AD).